We begin with the raw amino-acid sequence, 206 residues long: Large ribosomal subunit protein uL4 (206 aa).

The tract at residues 63-85 (MYKQKGTGSARHGSARAPQFRGG) is disordered.

This sequence belongs to the universal ribosomal protein uL4 family. As to quaternary structure, part of the 50S ribosomal subunit.

Functionally, one of the primary rRNA binding proteins, this protein initially binds near the 5'-end of the 23S rRNA. It is important during the early stages of 50S assembly. It makes multiple contacts with different domains of the 23S rRNA in the assembled 50S subunit and ribosome. Its function is as follows. Forms part of the polypeptide exit tunnel. The sequence is that of Large ribosomal subunit protein uL4 from Beijerinckia indica subsp. indica (strain ATCC 9039 / DSM 1715 / NCIMB 8712).